We begin with the raw amino-acid sequence, 318 residues long: Deoxyribose-phosphate aldolase (318 aa).

Residue D155 is the Proton donor/acceptor of the active site. Residue K218 is the Schiff-base intermediate with acetaldehyde of the active site. K254 serves as the catalytic Proton donor/acceptor.

It belongs to the DeoC/FbaB aldolase family. DeoC type 2 subfamily. As to quaternary structure, interacts with YBX1. Mainly expressed in liver, lung and colon.

It localises to the cytoplasm. The protein resides in the cytoplasmic granule. It is found in the nucleus. The catalysed reaction is 2-deoxy-D-ribose 5-phosphate = D-glyceraldehyde 3-phosphate + acetaldehyde. It participates in carbohydrate degradation; 2-deoxy-D-ribose 1-phosphate degradation; D-glyceraldehyde 3-phosphate and acetaldehyde from 2-deoxy-alpha-D-ribose 1-phosphate: step 2/2. Its function is as follows. Catalyzes a reversible aldol reaction between acetaldehyde and D-glyceraldehyde 3-phosphate to generate 2-deoxy-D-ribose 5-phosphate. Participates in stress granule (SG) assembly. May allow ATP production from extracellular deoxyinosine in conditions of energy deprivation. The chain is Deoxyribose-phosphate aldolase (DERA) from Homo sapiens (Human).